We begin with the raw amino-acid sequence, 167 residues long: MTEETTAIVQAGPTSIWLSENGFEHQALEADHSGVELIKVEADFLIPLATALYAYGFNYLQCQGAYDLGPGKELVSFYHLVKVTDNVDSPVEVRLKVFLPRDNPRVASVYWIWKAADWQERESYDMFGIIYEGHPHLKRILMPEDWVGWPLRKDYVSPEFYELQDAY.

It belongs to the complex I 30 kDa subunit family. NDH-1 can be composed of about 15 different subunits; different subcomplexes with different compositions have been identified which probably have different functions.

It localises to the cellular thylakoid membrane. The enzyme catalyses a plastoquinone + NADH + (n+1) H(+)(in) = a plastoquinol + NAD(+) + n H(+)(out). It carries out the reaction a plastoquinone + NADPH + (n+1) H(+)(in) = a plastoquinol + NADP(+) + n H(+)(out). Functionally, NDH-1 shuttles electrons from an unknown electron donor, via FMN and iron-sulfur (Fe-S) centers, to quinones in the respiratory and/or the photosynthetic chain. The immediate electron acceptor for the enzyme in this species is believed to be plastoquinone. Couples the redox reaction to proton translocation, and thus conserves the redox energy in a proton gradient. Cyanobacterial NDH-1 also plays a role in inorganic carbon-concentration. This chain is NAD(P)H-quinone oxidoreductase subunit J, found in Microcystis aeruginosa (strain NIES-843 / IAM M-2473).